Reading from the N-terminus, the 327-residue chain is Probable cell division protein WhiA (327 aa).

The segment at residues 275 to 308 (SLEELGRLADPPMTKDAVAGRIRRLLSMADRKAK) is a DNA-binding region (H-T-H motif).

It belongs to the WhiA family.

In terms of biological role, involved in cell division and chromosome segregation. The polypeptide is Probable cell division protein WhiA (Mycobacterium avium (strain 104)).